The primary structure comprises 590 residues: UvrABC system protein C (590 aa).

Positions 14 to 91 (EQPGCYLMKD…IKKHDPKYNV (78 aa)) constitute a GIY-YIG domain. Residues 196-231 (EDVKRELAEKMHEAAETLEFERAKEYRDQIAAIEMT) enclose the UVR domain.

Belongs to the UvrC family. As to quaternary structure, interacts with UvrB in an incision complex.

The protein localises to the cytoplasm. The UvrABC repair system catalyzes the recognition and processing of DNA lesions. UvrC both incises the 5' and 3' sides of the lesion. The N-terminal half is responsible for the 3' incision and the C-terminal half is responsible for the 5' incision. This is UvrABC system protein C from Geobacillus kaustophilus (strain HTA426).